The sequence spans 360 residues: Peptide chain release factor 1 (360 aa).

At Q235 the chain carries N5-methylglutamine. Over residues 285-295 the composition is skewed to basic and acidic residues; the sequence is RQAAEQTDMRR. The tract at residues 285-309 is disordered; the sequence is RQAAEQTDMRRNLLGSGDRSDKIRT.

It belongs to the prokaryotic/mitochondrial release factor family. Post-translationally, methylated by PrmC. Methylation increases the termination efficiency of RF1.

The protein localises to the cytoplasm. Peptide chain release factor 1 directs the termination of translation in response to the peptide chain termination codons UAG and UAA. The chain is Peptide chain release factor 1 from Haemophilus influenzae (strain 86-028NP).